We begin with the raw amino-acid sequence, 473 residues long: Argininosuccinate lyase (473 aa).

It belongs to the lyase 1 family. Argininosuccinate lyase subfamily.

Its subcellular location is the cytoplasm. It carries out the reaction 2-(N(omega)-L-arginino)succinate = fumarate + L-arginine. It functions in the pathway amino-acid biosynthesis; L-arginine biosynthesis; L-arginine from L-ornithine and carbamoyl phosphate: step 3/3. The protein is Argininosuccinate lyase of Mycobacteroides abscessus (strain ATCC 19977 / DSM 44196 / CCUG 20993 / CIP 104536 / JCM 13569 / NCTC 13031 / TMC 1543 / L948) (Mycobacterium abscessus).